The chain runs to 707 residues: MSNFGVIKRDGSRAEFEIQRIINAIKKAASAVNISDEFYCHQIGQEVGNEIFTRHQGEIDINQIQKIVEDKLMASRYPEVARAYIEYRHDRDLAREKRSQLTKEIEGLIEQSNVELLNENANKDAKVIPTQRDLLAGIVAKHYAKHNILPRDVVEAHEKGEIHYHDLDYAPFFPMFNCMLVDLEGMLSRGFKMGNAEIEPPKSIGTATAVTAQIIAQVASHIYGGTTINRIDEVLSPYVQISYEKHLKHAQEWNVPDVEGYAKALIEKECFDAFQSLEYEVNTLHTSNGQTPFVTFGFGLGTSWQSRLIQQAILKNRIRGLGKNHKTPVFPKLVFTIKKGLNQNKGDPNYDIKQLALECASKRMYPDILNYDQVVKVTGSFKAPMGCRSFLGAYEEKGHEIHDGRNNLGVVSLNLPRIALESKNEEDFYRTLDERLAIAKKALMTRIARLENTKARVAPILYMEGACGVRLKADENVAQIFKNGRASISLGYIGIHETINALYNKGHIFDDEQLREKGIAIVRHLSEAVKRWQKETGYAFSLYSTPSENLCDRFCRLDTKKFGVIEGVTDKGYYTNSYHLDVEKKVNPYDKLDFEMTYPPLASGGFICYGEYPNIQHNLKALEDVWDYSYDRVPYYGTNTPIDECYECGFTGEFECTSKGFVCPKCGNHDSTKVSVTRRVCGYLGSPDARPFNAGKQEEVKRRVKHL.

The 92-residue stretch at 4–95 (FGVIKRDGSR…EYRHDRDLAR (92 aa)) folds into the ATP-cone domain. Positions 584–707 (KKVNPYDKLD…EEVKRRVKHL (124 aa)) constitute a Glycine radical domain. Zn(2+)-binding residues include Cys-645, Cys-648, Cys-663, and Cys-666. Position 682 is a glycine radical (Gly-682).

It belongs to the anaerobic ribonucleoside-triphosphate reductase family. Forms a tetramer composed of two NrdD and two NrdG subunits.

The enzyme catalyses a ribonucleoside 5'-triphosphate + formate + H(+) = a 2'-deoxyribonucleoside 5'-triphosphate + CO2 + H2O. Activated under anaerobic conditions by NrdG, a tightly associated activase. Activation involves the formation of a glycyl radical at Gly-682. Catalyzes the conversion of ribonucleotides into deoxyribonucleotides, which are required for DNA synthesis and repair. The protein is Anaerobic ribonucleoside-triphosphate reductase (nrdD) of Haemophilus influenzae (strain ATCC 51907 / DSM 11121 / KW20 / Rd).